We begin with the raw amino-acid sequence, 400 residues long: Coiled-coil domain-containing glutamate-rich protein 1 (400 aa).

Basic and acidic residues predominate over residues 1 to 11 (MTQTVNEREDP). 3 disordered regions span residues 1-68 (MTQT…IPGP), 134-164 (RPPGRKKRWGRRGRGLRRHPRRSFPRNPPID), and 203-353 (QEKL…DKFL). Over residues 31–45 (YHRRQRGAPMSKRRY) the composition is skewed to basic residues. A compositionally biased stretch (basic and acidic residues) spans 46 to 57 (RDGPKTEYEAPR). Basic residues predominate over residues 137 to 157 (GRKKRWGRRGRGLRRHPRRSF). Residues 209–220 (QQAALRAHQAQA) are compositionally biased toward low complexity. Polar residues predominate over residues 255-271 (PSLTFSPAPGQQNQSPT). Residues 275–347 (VEEEEKNVDD…EAGLEEGEQR (73 aa)) are compositionally biased toward acidic residues. A coiled-coil region spans residues 299 to 335 (EEEEVDGESEDEDVDEEEVEEAGNGEEREEDQEEEDV).

The protein resides in the nucleus. Regulator of histone epigenetic modifications and chromatin compaction into the sperm head, required for histone-to-protamine (HTP) transition. HTP is a key event in which somatic histones are first replaced by testis-specific histone variants, then transition proteins (TNPs) are incorporated into the spermatid nucleus, and finally protamines (PRMs) replace the TNPs to promote chromatin condensation. The sequence is that of Coiled-coil domain-containing glutamate-rich protein 1 (Ccer1) from Rattus norvegicus (Rat).